Here is a 96-residue protein sequence, read N- to C-terminus: uncharacterized protein (96 aa).

A helical membrane pass occupies residues 13–35 (PVVRYVVALLHWLLWRVVVIIAI).

The protein localises to the membrane. This is an uncharacterized protein from Archaeoglobus fulgidus (strain ATCC 49558 / DSM 4304 / JCM 9628 / NBRC 100126 / VC-16).